The sequence spans 91 residues: Cell division protein FtsB (91 aa).

The Cytoplasmic portion of the chain corresponds to 1–3 (MRW). The helical transmembrane segment at 4-21 (PVIILAVLVVVLQYPLWL) threads the bilayer. Topologically, residues 22–91 (GKGGWLRVWE…EIFVQVPQKH (70 aa)) are periplasmic. Positions 28–72 (RVWEVDRKLHEQREENTRLEERNAGLDAEVRDLKSGNEAIEERAR) form a coiled coil.

It belongs to the FtsB family. As to quaternary structure, part of a complex composed of FtsB, FtsL and FtsQ.

The protein resides in the cell inner membrane. In terms of biological role, essential cell division protein. May link together the upstream cell division proteins, which are predominantly cytoplasmic, with the downstream cell division proteins, which are predominantly periplasmic. This Azoarcus sp. (strain BH72) protein is Cell division protein FtsB.